Reading from the N-terminus, the 740-residue chain is Ion-translocating oxidoreductase complex subunit C (740 aa).

4Fe-4S ferredoxin-type domains are found at residues 369-397 and 407-436; these read GEPQ…QQLY and KATT…VQYF. Cys-377, Cys-380, Cys-383, Cys-387, Cys-416, Cys-419, Cys-422, and Cys-426 together coordinate [4Fe-4S] cluster. Disordered stretches follow at residues 602 to 652, 664 to 685, and 695 to 714; these read KLEQ…DPRK, ARKL…PRKA, and KARK…QVDP. Residues 605–615 show a composition bias toward low complexity; that stretch reads QQQANAEPEQQ.

It belongs to the 4Fe4S bacterial-type ferredoxin family. RnfC subfamily. In terms of assembly, the complex is composed of six subunits: RsxA, RsxB, RsxC, RsxD, RsxE and RsxG. [4Fe-4S] cluster serves as cofactor.

It is found in the cell inner membrane. Functionally, part of a membrane-bound complex that couples electron transfer with translocation of ions across the membrane. Required to maintain the reduced state of SoxR. This chain is Ion-translocating oxidoreductase complex subunit C, found in Escherichia coli O157:H7.